A 1049-amino-acid polypeptide reads, in one-letter code: Self-sufficient cytochrome P450 monooxygenase CYP505E4 (1049 aa).

Cys405 provides a ligand contact to heme. Over residues 461–470 (SATALSQHNM) the composition is skewed to polar residues. The disordered stretch occupies residues 461 to 491 (SATALSQHNMSAGATASPGSSTHLAGDENGQ). Low complexity predominate over residues 471 to 482 (SAGATASPGSST). Residues 499–640 (ISFFYGSNSG…DLEVWEETNL (142 aa)) form the Flavodoxin-like domain. FMN-binding positions include 505 to 509 (SNSGT) and 584 to 616 (VFGC…TRLT). Positions 678-906 (RDLVEGKVTA…RPAKDAFHLP (229 aa)) constitute an FAD-binding FR-type domain.

In the N-terminal section; belongs to the cytochrome P450 family. FAD serves as cofactor. It depends on FMN as a cofactor. Heme is required as a cofactor.

It catalyses the reaction 2 oxidized [cytochrome P450] + NADPH = 2 reduced [cytochrome P450] + NADP(+) + H(+). It carries out the reaction an organic molecule + reduced [NADPH--hemoprotein reductase] + O2 = an alcohol + oxidized [NADPH--hemoprotein reductase] + H2O + H(+). The enzyme catalyses dodecanoate + reduced [NADPH--hemoprotein reductase] + O2 = 5-hydroxydodecanoate + oxidized [NADPH--hemoprotein reductase] + H2O + H(+). The catalysed reaction is dodecan-1-ol + reduced [NADPH--hemoprotein reductase] + O2 = 1,5-dodecanediol + oxidized [NADPH--hemoprotein reductase] + H2O + H(+). It catalyses the reaction dodecanoate + reduced [NADPH--hemoprotein reductase] + O2 = 9-hydroxydodecanoate + oxidized [NADPH--hemoprotein reductase] + H2O + H(+). It carries out the reaction dodecan-1-ol + reduced [NADPH--hemoprotein reductase] + O2 = 1,4-dodecanediol + oxidized [NADPH--hemoprotein reductase] + H2O + H(+). The enzyme catalyses dodecan-1-ol + reduced [NADPH--hemoprotein reductase] + O2 = 1,6-dodecanediol + oxidized [NADPH--hemoprotein reductase] + H2O + H(+). In terms of biological role, self-sufficient cytochrome P450 monooxygenase that catalyzes the regioselective in-chain hydroxylation of alkanes, fatty alcohols, and fatty acids at the omega-7 position. Performs hydroxylation of C10-C16 n-alkanes and C12 and C14 fatty alcohols; and thereby enables the one step biocatalytic synthesis of rare alcohols such as 5-dodecanol and 7-tetradecanol. Converts 1-dodecanol into 1,5-dodecanediol as major product with very little sub-terminally hydroxylated products with the 1,4-dodecanediol and 1,6-dodecanediol more abundant. Converts dodecanoic acid to 5-hydroxydodecanoic acid which can be further converted into delta-dodecalactone by lactonization of the 5-hydroxy acid at low pH. Also gives sub-terminal hydroxylation of dodecanoic acid with 9-hydroxydodecanoic acid being the second most abundant product. Does not show any significant activity toward tetradecanoic acid. The polypeptide is Self-sufficient cytochrome P450 monooxygenase CYP505E4 (Penicillium camemberti (strain FM 013)).